The chain runs to 345 residues: 3-isopropylmalate dehydrogenase (345 aa).

74–87 (GPKWDGLPRKIRPE) is a binding site for NAD(+). Substrate contacts are provided by Arg94, Arg104, Arg132, and Asp217. Positions 217, 241, and 245 each coordinate Mg(2+). An NAD(+)-binding site is contributed by 274–286 (GSAPDIAGKGIAN).

The protein belongs to the isocitrate and isopropylmalate dehydrogenases family. LeuB type 1 subfamily. In terms of assembly, homodimer. Mg(2+) serves as cofactor. Mn(2+) is required as a cofactor.

The protein localises to the cytoplasm. It catalyses the reaction (2R,3S)-3-isopropylmalate + NAD(+) = 4-methyl-2-oxopentanoate + CO2 + NADH. It participates in amino-acid biosynthesis; L-leucine biosynthesis; L-leucine from 3-methyl-2-oxobutanoate: step 3/4. Catalyzes the oxidation of 3-carboxy-2-hydroxy-4-methylpentanoate (3-isopropylmalate) to 3-carboxy-4-methyl-2-oxopentanoate. The product decarboxylates to 4-methyl-2 oxopentanoate. The chain is 3-isopropylmalate dehydrogenase (leuB) from Thermus thermophilus (strain ATCC 27634 / DSM 579 / HB8).